We begin with the raw amino-acid sequence, 157 residues long: MALSNYVFGNSAADPFFTEMDRAVNRMINNALGVAPTSAGKAGHTHAPMDIIESPTAFELHADAPGMGPDDVKVELQEGVLMVTGERKLSHTTKEAGGKVWRSERTAYSFSRAFSLPENANPDGITAAMDKGVLVVTVPKREPPAKPEPKRIAVTGA.

The region spanning 40–155 (GKAGHTHAPM…KPEPKRIAVT (116 aa)) is the sHSP domain.

Belongs to the small heat shock protein (HSP20) family.

The protein localises to the plastid. The protein resides in the chloroplast. This chain is Heat shock 22 kDa protein, chloroplastic, found in Chlamydomonas reinhardtii (Chlamydomonas smithii).